The chain runs to 290 residues: 4-hydroxy-tetrahydrodipicolinate synthase (290 aa).

A pyruvate-binding site is contributed by Ser-44. Residue Tyr-132 is the Proton donor/acceptor of the active site. Lys-161 acts as the Schiff-base intermediate with substrate in catalysis. Val-202 is a binding site for pyruvate.

It belongs to the DapA family. As to quaternary structure, homotetramer; dimer of dimers.

Its subcellular location is the cytoplasm. It carries out the reaction L-aspartate 4-semialdehyde + pyruvate = (2S,4S)-4-hydroxy-2,3,4,5-tetrahydrodipicolinate + H2O + H(+). It functions in the pathway amino-acid biosynthesis; L-lysine biosynthesis via DAP pathway; (S)-tetrahydrodipicolinate from L-aspartate: step 3/4. Functionally, catalyzes the condensation of (S)-aspartate-beta-semialdehyde [(S)-ASA] and pyruvate to 4-hydroxy-tetrahydrodipicolinate (HTPA). This Hydrogenobaculum sp. (strain Y04AAS1) protein is 4-hydroxy-tetrahydrodipicolinate synthase.